The chain runs to 626 residues: MSRILDRVDSPSDLKGLTTAELGILAEEIRQEIITVCSRNGGHLAPSLGVVELTLALHRVFTSPEDKIVWDVGHQAYAHKLVTGRRDRFATLRTLGGISGFLKRAESPHDVFDAGHASTSISAALGLAAARDLAGRNNKVVAVIGDGSMTGGIAYEGLNHAGHLNRDLVVVLNDNEMSIAENVGALSNFLSRTVTSEFVHTLKKDVETFLGGLDRIGRNVLKVAKRAEESLKGLFTPGMLFEAFGFEYIGPIDGHDIGRLTETFEKVKRFDDAVLIHVLTKKGKGFAPAEAKPSLFHGVGPFDPVSGEIVKGKGGATSYTGVFGQALTRIADEDERVVAITAAMPDGTGLGSFSARHPGRFFDVGIAEQHGVTFAAGLAAEGYRPVFAIYSSFLQRAYDQLFHDVCLMNLPVTFAIDRSGVVGSDGPTHHGLFDLSYLRTLPNMVVMAPKDENELQHMLKTAIDHNGPAAVRYPRGNGLGVPLDQSLAPIPLGTSEVLRAGSGTCVVLAVGAMVGPALEAANTLEGEGIDLTVVNVRFVKPLDRELILSYVGRAGTLVTIEENVLQGGFGSAVLELLADEGVGGVAVHRFGYPDRYVEQGEQHELRSRYGLDAEGIAGRIRTLSAR.

Thiamine diphosphate-binding positions include His-74 and 115-117 (GHA). Residue Asp-146 participates in Mg(2+) binding. Thiamine diphosphate is bound by residues 147–148 (GS), Asn-175, Phe-286, and Glu-368. Asn-175 is a binding site for Mg(2+).

This sequence belongs to the transketolase family. DXPS subfamily. In terms of assembly, homodimer. The cofactor is Mg(2+). It depends on thiamine diphosphate as a cofactor.

The catalysed reaction is D-glyceraldehyde 3-phosphate + pyruvate + H(+) = 1-deoxy-D-xylulose 5-phosphate + CO2. The protein operates within metabolic intermediate biosynthesis; 1-deoxy-D-xylulose 5-phosphate biosynthesis; 1-deoxy-D-xylulose 5-phosphate from D-glyceraldehyde 3-phosphate and pyruvate: step 1/1. Catalyzes the acyloin condensation reaction between C atoms 2 and 3 of pyruvate and glyceraldehyde 3-phosphate to yield 1-deoxy-D-xylulose-5-phosphate (DXP). The sequence is that of 1-deoxy-D-xylulose-5-phosphate synthase 2 from Geobacter sulfurreducens (strain ATCC 51573 / DSM 12127 / PCA).